Consider the following 328-residue polypeptide: MDLNTILIIVGIVALVALIVHGLWSNRREKSKYFDKANKFDRTSLTSRSHTQEEMVQPNNISPNTYVENGHTPIPQPTTEKLPSEAELIDYRQSDKSVDDIKISIPNTQPIYDMGNHRSEPIQPTQPQYDMPTANNVASMTLEQLEAQSQNVGFNGINSSSPELRVQLAELSHEEHQVDYNLSFNEPKAETTAHPKQTTGYIQLYLIPKSSEEFNGAKLVQALENLGFILGKDEMYHRHLDLSVASPVLFSVANLEQPGTFNAYNLAEFNTIGIVLFMQLPSPGNNLANLRMMMRAAHTLAEDLQGVILTEEQEIFDANAEQAYLARV.

The Periplasmic segment spans residues 1–4 (MDLN). The chain crosses the membrane as a helical span at residues 5–25 (TILIIVGIVALVALIVHGLWS). Topologically, residues 26–328 (NRREKSKYFD…NAEQAYLARV (303 aa)) are cytoplasmic. The interval 44-82 (SLTSRSHTQEEMVQPNNISPNTYVENGHTPIPQPTTEKL) is disordered. Polar residues predominate over residues 57-67 (QPNNISPNTYV).

The protein belongs to the ZipA family. In terms of assembly, interacts with FtsZ via their C-terminal domains.

The protein localises to the cell inner membrane. Functionally, essential cell division protein that stabilizes the FtsZ protofilaments by cross-linking them and that serves as a cytoplasmic membrane anchor for the Z ring. Also required for the recruitment to the septal ring of downstream cell division proteins. The polypeptide is Cell division protein ZipA (Haemophilus influenzae (strain ATCC 51907 / DSM 11121 / KW20 / Rd)).